Consider the following 219-residue polypeptide: LexA repressor (219 aa).

Positions 28–48 (RAEIAAELGFRSANAAEEHLQ) form a DNA-binding region, H-T-H motif. Residues serine 138 and lysine 175 each act as for autocatalytic cleavage activity in the active site.

It belongs to the peptidase S24 family. As to quaternary structure, homodimer.

The enzyme catalyses Hydrolysis of Ala-|-Gly bond in repressor LexA.. Functionally, represses a number of genes involved in the response to DNA damage (SOS response), including recA and lexA. In the presence of single-stranded DNA, RecA interacts with LexA causing an autocatalytic cleavage which disrupts the DNA-binding part of LexA, leading to derepression of the SOS regulon and eventually DNA repair. This Herminiimonas arsenicoxydans protein is LexA repressor.